The sequence spans 298 residues: MSATGPGIVVIDKPAGMTSHDVVGRCRRIFATRRVGHAGTLDPMATGVLVIGIERATKILGLLTAAPKSYAATIRLGQTTSTEDAEGQVLQSVPAKHLTIEAIDAAMERLRGEIRQVPSSVSAIKVGGRRAYRLARQGRSVQLEARPIRIDRFELLAARRRDQLIDIDVEIDCSSGTYIRALARDLGDALGVGGHVTALRRTRVGRFELDQARSLDDLAERPALSLSLDEACLLMFARRDLTAAEASAAANGRSLPAVGIDGVYAACDADGRVIALLRDEGSRTRSVAVLRPATMHPG.

Aspartate 42 serves as the catalytic Nucleophile.

Belongs to the pseudouridine synthase TruB family. Type 1 subfamily.

It carries out the reaction uridine(55) in tRNA = pseudouridine(55) in tRNA. In terms of biological role, responsible for synthesis of pseudouridine from uracil-55 in the psi GC loop of transfer RNAs. This chain is tRNA pseudouridine synthase B, found in Mycobacterium tuberculosis (strain CDC 1551 / Oshkosh).